We begin with the raw amino-acid sequence, 295 residues long: Phosphatidylserine decarboxylase proenzyme (295 aa).

Catalysis depends on charge relay system; for autoendoproteolytic cleavage activity residues aspartate 113, histidine 169, and serine 256. Serine 256 acts as the Schiff-base intermediate with substrate; via pyruvic acid; for decarboxylase activity in catalysis. Serine 256 carries the pyruvic acid (Ser); by autocatalysis modification.

This sequence belongs to the phosphatidylserine decarboxylase family. PSD-B subfamily. Prokaryotic type II sub-subfamily. Heterodimer of a large membrane-associated beta subunit and a small pyruvoyl-containing alpha subunit. Pyruvate is required as a cofactor. Is synthesized initially as an inactive proenzyme. Formation of the active enzyme involves a self-maturation process in which the active site pyruvoyl group is generated from an internal serine residue via an autocatalytic post-translational modification. Two non-identical subunits are generated from the proenzyme in this reaction, and the pyruvate is formed at the N-terminus of the alpha chain, which is derived from the carboxyl end of the proenzyme. The autoendoproteolytic cleavage occurs by a canonical serine protease mechanism, in which the side chain hydroxyl group of the serine supplies its oxygen atom to form the C-terminus of the beta chain, while the remainder of the serine residue undergoes an oxidative deamination to produce ammonia and the pyruvoyl prosthetic group on the alpha chain. During this reaction, the Ser that is part of the protease active site of the proenzyme becomes the pyruvoyl prosthetic group, which constitutes an essential element of the active site of the mature decarboxylase.

The protein localises to the cell membrane. The enzyme catalyses a 1,2-diacyl-sn-glycero-3-phospho-L-serine + H(+) = a 1,2-diacyl-sn-glycero-3-phosphoethanolamine + CO2. It functions in the pathway phospholipid metabolism; phosphatidylethanolamine biosynthesis; phosphatidylethanolamine from CDP-diacylglycerol: step 2/2. Functionally, catalyzes the formation of phosphatidylethanolamine (PtdEtn) from phosphatidylserine (PtdSer). In Clostridium botulinum (strain Kyoto / Type A2), this protein is Phosphatidylserine decarboxylase proenzyme.